The chain runs to 151 residues: Macrodomain Ter protein (151 aa).

The protein belongs to the MatP family. In terms of assembly, homodimer.

The protein resides in the cytoplasm. In terms of biological role, required for spatial organization of the terminus region of the chromosome (Ter macrodomain) during the cell cycle. Prevents early segregation of duplicated Ter macrodomains during cell division. Binds specifically to matS, which is a 13 bp signature motif repeated within the Ter macrodomain. The sequence is that of Macrodomain Ter protein from Photorhabdus laumondii subsp. laumondii (strain DSM 15139 / CIP 105565 / TT01) (Photorhabdus luminescens subsp. laumondii).